Reading from the N-terminus, the 231-residue chain is uncharacterized protein (231 aa).

Residues 3-119 (RADFCIIGLG…RTMGIREALI (117 aa)) enclose the RCK N-terminal domain. Residues 134-221 (HGMETEIINL…VNQYLRYINP (88 aa)) enclose the RCK C-terminal domain.

This is an uncharacterized protein from Mycoplasma pneumoniae (strain ATCC 29342 / M129 / Subtype 1) (Mycoplasmoides pneumoniae).